The following is a 297-amino-acid chain: PIH1 domain-containing protein 1 (297 aa).

It belongs to the PIH1 family.

Its subcellular location is the nucleus. Involved in the assembly of C/D box small nucleolar ribonucleoprotein (snoRNP) particles. Recruits the SWI/SNF complex to the core promoter of rRNA genes and enhances pre-rRNA transcription. Mediates interaction of TELO2 with the R2TP complex which is necessary for the stability of MTOR and SMG1. Positively regulates the assembly and activity of the mTORC1 complex. This is PIH1 domain-containing protein 1 (pih1d1) from Xenopus laevis (African clawed frog).